The sequence spans 363 residues: Fructose-bisphosphate aldolase (363 aa).

Arginine 56 and lysine 147 together coordinate substrate. Glutamate 188 (proton acceptor) is an active-site residue. Lysine 230 (schiff-base intermediate with dihydroxyacetone-P) is an active-site residue.

This sequence belongs to the class I fructose-bisphosphate aldolase family.

It catalyses the reaction beta-D-fructose 1,6-bisphosphate = D-glyceraldehyde 3-phosphate + dihydroxyacetone phosphate. The protein operates within carbohydrate degradation; glycolysis; D-glyceraldehyde 3-phosphate and glycerone phosphate from D-glucose: step 4/4. This chain is Fructose-bisphosphate aldolase (FBPA), found in Echinococcus multilocularis (Fox tapeworm).